Consider the following 279-residue polypeptide: Energy-coupling factor transporter ATP-binding protein EcfA1 (279 aa).

The ABC transporter domain occupies 6–240; it reads VRLEHVFYKY…ADAMRAIGLG (235 aa). Residue 40–47 coordinates ATP; the sequence is GHNGSGKS.

Belongs to the ABC transporter superfamily. Energy-coupling factor EcfA family. In terms of assembly, forms a stable energy-coupling factor (ECF) transporter complex composed of 2 membrane-embedded substrate-binding proteins (S component), 2 ATP-binding proteins (A component) and 2 transmembrane proteins (T component).

It is found in the cell membrane. Its function is as follows. ATP-binding (A) component of a common energy-coupling factor (ECF) ABC-transporter complex. Unlike classic ABC transporters this ECF transporter provides the energy necessary to transport a number of different substrates. The sequence is that of Energy-coupling factor transporter ATP-binding protein EcfA1 from Listeria innocua serovar 6a (strain ATCC BAA-680 / CLIP 11262).